A 205-amino-acid chain; its full sequence is MNDNREQLTQQIIDAGRFLYGRGWSPATSSNYSARLDEQRALLTVSGKHKGQLGFDDVLATDLAGNSLEPGKKPSAETLLHTQLYAWNPAIGAVLHTHSVNATVLSRLVRGDRLVLQDYELQKAFAGVTTHEGQVEVPIFDNDQDIARLASRVQPWLEAHPYCPGYLIRGHGLYTWGARMSDALRQVEAFEFLFECELKVLSLSR.

Positions 96 and 98 each coordinate Zn(2+).

This sequence belongs to the aldolase class II family. MtnB subfamily. The cofactor is Zn(2+).

The enzyme catalyses 5-(methylsulfanyl)-D-ribulose 1-phosphate = 5-methylsulfanyl-2,3-dioxopentyl phosphate + H2O. It participates in amino-acid biosynthesis; L-methionine biosynthesis via salvage pathway; L-methionine from S-methyl-5-thio-alpha-D-ribose 1-phosphate: step 2/6. In terms of biological role, catalyzes the dehydration of methylthioribulose-1-phosphate (MTRu-1-P) into 2,3-diketo-5-methylthiopentyl-1-phosphate (DK-MTP-1-P). The protein is Methylthioribulose-1-phosphate dehydratase of Pseudomonas aeruginosa (strain UCBPP-PA14).